A 182-amino-acid chain; its full sequence is Pentatricopeptide repeat-containing protein At2g01360 (182 aa).

3 PPR repeats span residues 30-64, 65-95, and 98-132; these read EKSA…QHSL, GVYH…LPDD, and GLSA…EIMP.

It belongs to the PPR family. P subfamily.

In Arabidopsis thaliana (Mouse-ear cress), this protein is Pentatricopeptide repeat-containing protein At2g01360.